Reading from the N-terminus, the 335-residue chain is Biotin synthase (335 aa).

Residues 43-269 (YFGKKVKLNM…INPTKEIRIA (227 aa)) form the Radical SAM core domain. Cysteine 61, cysteine 65, and cysteine 68 together coordinate [4Fe-4S] cluster. [2Fe-2S] cluster is bound by residues cysteine 104, cysteine 137, cysteine 197, and arginine 267.

This sequence belongs to the radical SAM superfamily. Biotin synthase family. In terms of assembly, homodimer. The cofactor is [4Fe-4S] cluster. [2Fe-2S] cluster serves as cofactor.

It carries out the reaction (4R,5S)-dethiobiotin + (sulfur carrier)-SH + 2 reduced [2Fe-2S]-[ferredoxin] + 2 S-adenosyl-L-methionine = (sulfur carrier)-H + biotin + 2 5'-deoxyadenosine + 2 L-methionine + 2 oxidized [2Fe-2S]-[ferredoxin]. It participates in cofactor biosynthesis; biotin biosynthesis; biotin from 7,8-diaminononanoate: step 2/2. Functionally, catalyzes the conversion of dethiobiotin (DTB) to biotin by the insertion of a sulfur atom into dethiobiotin via a radical-based mechanism. In Staphylococcus aureus (strain MSSA476), this protein is Biotin synthase.